A 144-amino-acid polypeptide reads, in one-letter code: UPF0102 protein BURPS668_3819 (144 aa).

A disordered region spans residues 1-28; it reads MCHAREASLGTGEPEAAPRDNFPREAGS. Residues 16-28 show a composition bias toward basic and acidic residues; that stretch reads AAPRDNFPREAGS.

It belongs to the UPF0102 family.

This chain is UPF0102 protein BURPS668_3819, found in Burkholderia pseudomallei (strain 668).